The primary structure comprises 318 residues: Rhomboid-related protein 4 (318 aa).

The Cytoplasmic portion of the chain corresponds to 1-21 (MQRRSRGINTGLILLLSQIFH). A helical transmembrane segment spans residues 22 to 42 (VGINNIPPVTLATLALNIWFF). The Extracellular segment spans residues 43-106 (LNPQKPLYSS…RRLGSRWFAY (64 aa)). Residues 107-127 (VITTFSVLTGVVYLLLQFAVA) traverse the membrane as a helical segment. The Cytoplasmic portion of the chain corresponds to 128-137 (EFMDEPDFKR). Residues 138–154 (SCAVGFSGVLFALKVLN) form a helical membrane-spanning segment. Residue S144 is the Nucleophile of the active site. The Extracellular portion of the chain corresponds to 155–179 (NHYCPGGFVNILGFPVPNRFACWVE). Residues 180–204 (LVAIHLFSPGTSFAGHQAGILVGLM) form a helical membrane-spanning segment. Residue H195 is part of the active site. Topologically, residues 205 to 318 (YTQGPLKKIM…RQRLHRFDSQ (114 aa)) are cytoplasmic. The ubiquitin-binding domain (UBD) stretch occupies residues 271-286 (SEEEQLERALQASLWD). The tract at residues 285 to 318 (WDRGHTRNSPPPYGFHLSPEEEMRRQRLHRFDSQ) is disordered. The segment covering 302–318 (SPEEEMRRQRLHRFDSQ) has biased composition (basic and acidic residues). The tract at residues 303–318 (PEEEMRRQRLHRFDSQ) is VCP/p97-interacting motif (VIM).

It belongs to the peptidase S54 family. In terms of assembly, interacts with BIK and STEAP3. Interacts (via C-terminal domain) with VCP. Interacts with ubiquitin and ubiquitinated proteins.

It is found in the endoplasmic reticulum membrane. It localises to the mitochondrion membrane. It carries out the reaction Cleaves type-1 transmembrane domains using a catalytic dyad composed of serine and histidine that are contributed by different transmembrane domains.. With respect to regulation, inhibited by aprotinin. Functionally, intramembrane-cleaving serine protease that cleaves single transmembrane or multi-pass membrane proteins in the hydrophobic plane of the membrane, luminal loops and juxtamembrane regions. Involved in regulated intramembrane proteolysis and the subsequent release of functional polypeptides from their membrane anchors. Functional component of endoplasmic reticulum-associated degradation (ERAD) for misfolded membrane proteins. Required for the degradation process of some specific misfolded endoplasmic reticulum (ER) luminal proteins. Participates in the transfer of misfolded proteins from the ER to the cytosol, where they are destroyed by the proteasome in a ubiquitin-dependent manner. Functions in BIK, MPZ, PKD1, PTCRA, RHO, STEAP3 and TRAC processing. Involved in the regulation of exosomal secretion; inhibits the TSAP6-mediated secretion pathway. Involved in the regulation of apoptosis; modulates BIK-mediated apoptotic activity. Also plays a role in the regulation of spermatogenesis; inhibits apoptotic activity in spermatogonia. The protein is Rhomboid-related protein 4 (RHBDD1) of Pongo abelii (Sumatran orangutan).